The chain runs to 163 residues: Lipoprotein signal peptidase (163 aa).

4 helical membrane passes run 5–25, 37–57, 67–87, and 91–111; these read VLTF…TKSL, IIPG…FGML, LMLV…VFKS, and LSNL…GNLY. Catalysis depends on residues aspartate 121 and aspartate 139. The chain crosses the membrane as a helical span at residues 132-152; that stretch reads WPAFNVADASITIGIALFIGY.

The protein belongs to the peptidase A8 family.

Its subcellular location is the cell inner membrane. The catalysed reaction is Release of signal peptides from bacterial membrane prolipoproteins. Hydrolyzes -Xaa-Yaa-Zaa-|-(S,diacylglyceryl)Cys-, in which Xaa is hydrophobic (preferably Leu), and Yaa (Ala or Ser) and Zaa (Gly or Ala) have small, neutral side chains.. Its pathway is protein modification; lipoprotein biosynthesis (signal peptide cleavage). This protein specifically catalyzes the removal of signal peptides from prolipoproteins. This chain is Lipoprotein signal peptidase, found in Sulfurihydrogenibium sp. (strain YO3AOP1).